Here is a 554-residue protein sequence, read N- to C-terminus: D-3-phosphoglycerate dehydrogenase (554 aa).

Residues 177 to 178 (KI), aspartate 197, 256 to 258 (CSR), and aspartate 282 contribute to the NAD(+) site. The active site involves arginine 258. Residue glutamate 287 is part of the active site. Histidine 305 (proton donor) is an active-site residue. 305-308 (HLGA) is an NAD(+) binding site. Residues 482–554 (MLFTLHRDMP…GIRDAYTVKL (73 aa)) form the ACT domain.

This sequence belongs to the D-isomer specific 2-hydroxyacid dehydrogenase family.

It catalyses the reaction (2R)-3-phosphoglycerate + NAD(+) = 3-phosphooxypyruvate + NADH + H(+). It carries out the reaction (R)-2-hydroxyglutarate + NAD(+) = 2-oxoglutarate + NADH + H(+). It functions in the pathway amino-acid biosynthesis; L-serine biosynthesis; L-serine from 3-phospho-D-glycerate: step 1/3. Functionally, catalyzes the reversible oxidation of 3-phospho-D-glycerate to 3-phosphonooxypyruvate, the first step of the phosphorylated L-serine biosynthesis pathway. Also catalyzes the reversible oxidation of 2-hydroxyglutarate to 2-oxoglutarate. The polypeptide is D-3-phosphoglycerate dehydrogenase (serA) (Synechocystis sp. (strain ATCC 27184 / PCC 6803 / Kazusa)).